The following is a 1481-amino-acid chain: MQRSPLEKASVVSKLFFSWTRPVLKKGYRQRLELSDIYQIPSADSADNLSEKLEREWDRELASKKNPKLINALRRCFFWRFTFYGILLYLGEVTKAVQPLLLGRIIASYDPDNKTERSIAIYLGIGLCLLFIVRTLLLHPAIFGLHHIGMQMRIAMFSLIYKKTLKLSSRVLDKISIGQLVSLLSNNLNKFDEGLALAHFVWIAPLQVALLMGLIWELLQASAFCGLGFLIVLALFQAGLGRMMMKYRDQRAGKINERLVITSEMIENIQSVKAYCWEEAMEKMIENLRQTELKLTRKAAYVRYFNSSAFFFSGFFVVFLSVLPYALIKGIALRKIFTTISFCIVLRMAVTRQFPWAVQTWYDSLGAINKIQDFLQKQEYKTLEYNLTTTEVVMENVTAFWEEGFGELFEKVKQNNNNRKTSNGDDNLFFSNFSLLGTPVLKDINFKIERGQLLAVAGSTGAGKTSLLMMIMGELEPSEGKIKHSGRISFCSQFSWIMPGTIKENIIFGVSYDEYRYRSVIKACQLEEDISKFAEKDNIVLGEGGITLSGGQRARISLARAVYKDADLYLLDSPFGYLDVLTEKEIFESCVCKLMANKTRILVTSKMEHLKKADKILILHEGSSYFYGTFSELQNLRPDFSSKLMGYDSFDQFSSERRNSILTETLRRFSLEGDAPVSWTETKKQSFKQTGEFGEKRKNSILNSINSIRKFSIVQKTPLQMNGIEEDSDEPLERRLSLIPDSEQGEAILPRISVINTGPALQVRRRQSVLNMMTHSVNQGQSGHRKTTASTRKMSLAPQANLTELDIYSRRLSQETGLEISEEINEEDLKECFFDDMESIPAVTTWNTYLRYITLHKSLIFVLIWCLVIFLAEVAASLVLLWLLGNTRFQDKGNSTYSRNNSYAVIITNTSSYYVFYIYVGVADTLLALGFFRGLPLVHTLITVSKILHHKMLHSVLQAPMSTLNTLKAGGILNRFSKDIAILDDLLPLTIFDFIQLLLIVIGAIAVVSVLQPYIFLATVPVIAAFILLRAYFLQTSQQLKQLESAGRSPIFTHLVTSLKGLWTLRAFGRQPYFETLFHKALNLHTASWFLYLSTLRWFQMRIEMIFVIFFIAVTFISILTTGEGEGTVGIILTLAMNIMSTLQWAVNSSIDVDSLMRSVSRVFKFIDMPTEEGKPTKSTKAYKNGQLSKVMIIENSHVKKDDIWPSGGQMTIKDLTAKYVEGGNAILENISFSISPGQRVGLLGRTGSGKSTLLSAFLRLLNTEGEIQIDGVSWDSITLQQWRKAFGVIPQKVFIFTGTFRKNLDPYEQWSDQEIWKVADEVGLRSVIEQFPGKLDFVLVDGGCVLSHGHKQLMCLARSVLSKAKILLLDEPSAHLDPVTYQIIRRALKQAFADCTVILCEHRIEAMLECQQFLVIEENKVRQYDSIQKLLNEKSLFRQAISHSDRMKLFPHRNSSKYKSRPQIASLKEETEEEVQETRL.

Residues 1–77 (MQRSPLEKAS…KLINALRRCF (77 aa)) are Cytoplasmic-facing. A helical membrane pass occupies residues 78–98 (FWRFTFYGILLYLGEVTKAVQ). Positions 81 to 365 (FTFYGILLYL…WAVQTWYDSL (285 aa)) constitute an ABC transmembrane type-1 1 domain. Residues 99–122 (PLLLGRIIASYDPDNKTERSIAIY) lie on the Extracellular side of the membrane. Residues 123–146 (LGIGLCLLFIVRTLLLHPAIFGLH) traverse the membrane as a helical segment. The Cytoplasmic portion of the chain corresponds to 147 to 195 (HIGMQMRIAMFSLIYKKTLKLSSRVLDKISIGQLVSLLSNNLNKFDEGL). The helical transmembrane segment at 196-216 (ALAHFVWIAPLQVALLMGLIW) threads the bilayer. Topologically, residues 217-222 (ELLQAS) are extracellular. A helical transmembrane segment spans residues 223 to 243 (AFCGLGFLIVLALFQAGLGRM). At 244–298 (MMKYRDQRAGKINERLVITSEMIENIQSVKAYCWEEAMEKMIENLRQTELKLTRK) the chain is on the cytoplasmic side. Residues 299–319 (AAYVRYFNSSAFFFSGFFVVF) traverse the membrane as a helical segment. Residues 320 to 339 (LSVLPYALIKGIALRKIFTT) are Extracellular-facing. Residues 340–358 (ISFCIVLRMAVTRQFPWAV) traverse the membrane as a helical segment. The Cytoplasmic portion of the chain corresponds to 359-858 (QTWYDSLGAI…YLRYITLHKS (500 aa)). Residues tryptophan 401, serine 434, 458 to 465 (GSTGAGKT), and glutamine 493 contribute to the ATP site. The 224-residue stretch at 423-646 (NGDDNLFFSN…RPDFSSKLMG (224 aa)) folds into the ABC transporter 1 domain. Residue cysteine 524 is the site of S-palmitoyl cysteine attachment. Residues serine 549 and serine 660 each carry the phosphoserine modification. The disordered R region stretch occupies residues 654–831 (SSERRNSILT…EEINEEDLKE (178 aa)). The residue at position 670 (serine 670) is a Phosphoserine; by PKA. Serine 686 is modified (phosphoserine). Lysine 688 is covalently cross-linked (Glycyl lysine isopeptide (Lys-Gly) (interchain with G-Cter in ubiquitin)). Phosphoserine occurs at positions 700 and 712. Threonine 717 is modified (phosphothreonine). Phosphoserine is present on residues serine 737, serine 753, serine 768, serine 790, serine 795, and serine 813. A helical membrane pass occupies residues 859-879 (LIFVLIWCLVIFLAEVAASLV). Residues 859-1155 (LIFVLIWCLV…AVNSSIDVDS (297 aa)) enclose the ABC transmembrane type-1 2 domain. The Extracellular segment spans residues 880–918 (LLWLLGNTRFQDKGNSTYSRNNSYAVIITNTSSYYVFYI). 3 N-linked (GlcNAc...) asparagine glycosylation sites follow: asparagine 894, asparagine 900, and asparagine 909. The discontinuously helical transmembrane segment at 919 to 939 (YVGVADTLLALGFFRGLPLVH) threads the bilayer. Over 940 to 990 (TLITVSKILHHKMLHSVLQAPMSTLNTLKAGGILNRFSKDIAILDDLLPLT) the chain is Cytoplasmic. A helical membrane pass occupies residues 991–1011 (IFDFIQLLLIVIGAIAVVSVL). The Extracellular portion of the chain corresponds to 1012-1013 (QP). The helical transmembrane segment at 1014 to 1034 (YIFLATVPVIAAFILLRAYFL) threads the bilayer. Over 1035-1095 (QTSQQLKQLE…TASWFLYLST (61 aa)) the chain is Cytoplasmic. A helical membrane pass occupies residues 1096–1116 (LRWFQMRIEMIFVIFFIAVTF). The Extracellular portion of the chain corresponds to 1117–1130 (ISILTTGEGEGTVG). Residues 1131–1151 (IILTLAMNIMSTLQWAVNSSI) traverse the membrane as a helical segment. The Cytoplasmic segment spans residues 1152-1481 (DVDSLMRSVS…TEEEVQETRL (330 aa)). In terms of domain architecture, ABC transporter 2 spans 1211 to 1444 (MTIKDLTAKY…KSLFRQAISH (234 aa)). ATP is bound by residues tyrosine 1220 and 1245-1252 (GRTGSGKS). The tract at residues 1387–1481 (RALKQAFADC…TEEEVQETRL (95 aa)) is interaction with GORASP2. A lipid anchor (S-palmitoyl cysteine) is attached at cysteine 1396. Residues serine 1445 and serine 1457 each carry the phosphoserine modification. The tract at residues 1453 to 1481 (HRNSSKYKSRPQIASLKEETEEEVQETRL) is disordered. Residues 1471–1481 (ETEEEVQETRL) show a composition bias toward acidic residues. The PDZ-binding motif lies at 1479–1481 (TRL).

The protein belongs to the ABC transporter superfamily. ABCC family. CFTR transporter (TC 3.A.1.202) subfamily. In terms of assembly, monomer; does not require oligomerization for channel activity. May form oligomers in the membrane. Interacts with SLC26A3, SLC26A6 and NHERF1. Interacts with SHANK2. Interacts with MYO6. Interacts (via C-terminus) with GOPC (via PDZ domain); this promotes CFTR internalization and thereby decreases channel activity. Interacts with SLC4A7 through NHERF1. Found in a complex with MYO5B and RAB11A. Interacts with ANO1. Interacts with SLC26A8. Interacts with AHCYL1; the interaction increases CFTR activity. Interacts with CSE1L. The core-glycosylated form interacts with GORASP2 (via PDZ GRASP-type 1 domain) in respone to ER stress. Interacts with MARCHF2; the interaction leads to CFTR ubiqtuitination and degradation. Interacts with ADGRG2. Post-translationally, N-glycosylated. Phosphorylated; cAMP treatment promotes phosphorylation and activates the channel. Dephosphorylation decreases the ATPase activity (in vitro). Phosphorylation at PKA sites activates the channel. Phosphorylation at PKC sites enhances the response to phosphorylation by PKA. Phosphorylated by AMPK; this inhibits channel activity. In terms of processing, ubiquitinated, leading to its degradation in the lysosome. Deubiquitination by USP10 in early endosomes enhances its endocytic recycling to the cell membrane. Ubiquitinated by RNF185 during ER stress. Ubiquitinated by MARCHF2.

It localises to the apical cell membrane. The protein resides in the early endosome membrane. Its subcellular location is the cell membrane. It is found in the recycling endosome membrane. The protein localises to the endoplasmic reticulum membrane. It localises to the nucleus. The enzyme catalyses ATP + H2O + closed Cl(-) channel = ADP + phosphate + open Cl(-) channel.. It carries out the reaction chloride(in) = chloride(out). The catalysed reaction is hydrogencarbonate(in) = hydrogencarbonate(out). It catalyses the reaction ATP + H2O = ADP + phosphate + H(+). In terms of biological role, epithelial ion channel that plays an important role in the regulation of epithelial ion and water transport and fluid homeostasis. Mediates the transport of chloride ions across the cell membrane. Possesses an intrinsic ATPase activity and utilizes ATP to gate its channel; the passive flow of anions through the channel is gated by cycles of ATP binding and hydrolysis by the ATP-binding domains. The ion channel is also permeable to HCO(3)(-); selectivity depends on the extracellular chloride concentration. Exerts its function also by modulating the activity of other ion channels and transporters. Contributes to the regulation of the pH and the ion content of the epithelial fluid layer. Modulates the activity of the epithelial sodium channel (ENaC) complex, in part by regulating the cell surface expression of the ENaC complex. May regulate bicarbonate secretion and salvage in epithelial cells by regulating the transporter SLC4A7. Can inhibit the chloride channel activity of ANO1. Plays a role in the chloride and bicarbonate homeostasis during sperm epididymal maturation and capacitation. The sequence is that of Cystic fibrosis transmembrane conductance regulator from Saimiri boliviensis boliviensis (Bolivian squirrel monkey).